Consider the following 238-residue polypeptide: Uridylate kinase (238 aa).

10–13 contacts ATP; it reads KFSG. Residues 18 to 23 form an involved in allosteric activation by GTP region; sequence GDSGFG. Residue glycine 52 participates in UMP binding. The ATP site is built by glycine 53 and arginine 57. UMP is bound by residues aspartate 73 and 134 to 141; that span reads TGNPFFTT. Threonine 161, tyrosine 167, and aspartate 170 together coordinate ATP.

The protein belongs to the UMP kinase family. Homohexamer.

It is found in the cytoplasm. The enzyme catalyses UMP + ATP = UDP + ADP. The protein operates within pyrimidine metabolism; CTP biosynthesis via de novo pathway; UDP from UMP (UMPK route): step 1/1. Its activity is regulated as follows. Allosterically activated by GTP. Inhibited by UTP. In terms of biological role, catalyzes the reversible phosphorylation of UMP to UDP. This is Uridylate kinase from Campylobacter curvus (strain 525.92).